The following is a 309-amino-acid chain: Elongation factor Ts (309 aa).

Residues 80 to 83 (TDFV) are involved in Mg(2+) ion dislocation from EF-Tu.

It belongs to the EF-Ts family.

It localises to the cytoplasm. Its function is as follows. Associates with the EF-Tu.GDP complex and induces the exchange of GDP to GTP. It remains bound to the aminoacyl-tRNA.EF-Tu.GTP complex up to the GTP hydrolysis stage on the ribosome. The protein is Elongation factor Ts of Rhodospirillum rubrum (strain ATCC 11170 / ATH 1.1.1 / DSM 467 / LMG 4362 / NCIMB 8255 / S1).